A 791-amino-acid polypeptide reads, in one-letter code: DUF1769 family protein duc1 (791 aa).

The tract at residues 158-189 is disordered; that stretch reads ADSQESDTESLPEINDSSDVSLSDLPSTNVTP. Residues 174–184 are compositionally biased toward low complexity; the sequence is SSDVSLSDLPS. Positions 373-379 match the FFAT motif; the sequence is RYFTALE. A Phosphotyrosine modification is found at Tyr374. Thr376 is subject to Phosphothreonine. Disordered stretches follow at residues 381–505, 542–606, and 630–658; these read QQDQ…SNRR, NVAG…VDGK, and PKPV…NLDP. Positions 415–426 are enriched in basic residues; the sequence is LIKRMSLRSKKS. The segment covering 444 to 453 has biased composition (low complexity); that stretch reads STASAASTSA. Over residues 455–473 the composition is skewed to basic and acidic residues; sequence KTEKEKKMSAPRRSLDKLI. Residues Ser477 and Ser493 each carry the phosphoserine modification. Over residues 477–487 the composition is skewed to basic residues; sequence SLHRHHHHHHK. Residues 555 to 564 show a composition bias toward polar residues; that stretch reads EQTSITSGVP. Ser574 is subject to Phosphoserine. Positions 574-586 are enriched in basic and acidic residues; it reads STPEKIVEERSID. Residues 587–601 are compositionally biased toward polar residues; sequence EVSQSNTPSSKQLPQ.

Belongs to the UPF0590 family. Interacts (via FFAT-motif) with scs2 (via MSP domain); the interaction is direct and serves to restrict the localization of duc1 to areas of cell membrane-endoplasmic reticulum contact sites, and away from the cell division site.

It is found in the cell membrane. Its function is as follows. Promotes the proper distribution of phosphatidylinositol 4,5-bisphosphate (PtdIns(4,5)P2/PIP2) synthesis at the cell membrane. May bind phosphatidylinositol 4,5-bisphosphate (PtdIns(4,5)P2/PIP2) and is required for robust anchoring of the contractile ring to the cell membrane. This Schizosaccharomyces pombe (strain 972 / ATCC 24843) (Fission yeast) protein is DUF1769 family protein duc1.